Consider the following 153-residue polypeptide: UPF0178 protein MXAN_5526 (153 aa).

This sequence belongs to the UPF0178 family.

The chain is UPF0178 protein MXAN_5526 from Myxococcus xanthus (strain DK1622).